The following is a 115-amino-acid chain: Large ribosomal subunit protein bL19 (115 aa).

The protein belongs to the bacterial ribosomal protein bL19 family.

This protein is located at the 30S-50S ribosomal subunit interface and may play a role in the structure and function of the aminoacyl-tRNA binding site. In Streptococcus gordonii (strain Challis / ATCC 35105 / BCRC 15272 / CH1 / DL1 / V288), this protein is Large ribosomal subunit protein bL19.